Reading from the N-terminus, the 225-residue chain is Shikimate kinase (225 aa).

27-32 (GAGKTT) lines the ATP pocket. Mg(2+) is bound at residue Thr31. Asp49, Arg73, and Gly95 together coordinate substrate. Arg132 is a binding site for ATP. Arg150 is a substrate binding site. The segment at 186–225 (GGSEPDEAADAAGGSEPDEAADAAGGSEPDEAADAAGGKR) is disordered.

Belongs to the shikimate kinase family. Monomer. The cofactor is Mg(2+).

The protein resides in the cytoplasm. It catalyses the reaction shikimate + ATP = 3-phosphoshikimate + ADP + H(+). It functions in the pathway metabolic intermediate biosynthesis; chorismate biosynthesis; chorismate from D-erythrose 4-phosphate and phosphoenolpyruvate: step 5/7. Catalyzes the specific phosphorylation of the 3-hydroxyl group of shikimic acid using ATP as a cosubstrate. In Frankia casuarinae (strain DSM 45818 / CECT 9043 / HFP020203 / CcI3), this protein is Shikimate kinase.